The primary structure comprises 127 residues: Fatty acid-binding protein, liver (127 aa).

Methionine 1 carries the post-translational modification N-acetylmethionine. Serine 11 is subject to Phosphoserine. Residues lysine 31 and lysine 36 each carry the N6-succinyllysine modification. Serine 39 carries the phosphoserine modification. Lysine 46 is subject to N6-succinyllysine. Threonine 51 carries the post-translational modification Phosphothreonine. A Phosphoserine modification is found at serine 56. An N6-succinyllysine mark is found at lysine 57, lysine 78, and lysine 90. Serine 100 is modified (phosphoserine). N6-succinyllysine is present on lysine 121.

The protein belongs to the calycin superfamily. Fatty-acid binding protein (FABP) family. As to quaternary structure, monomer.

Its subcellular location is the cytoplasm. Its function is as follows. Plays a role in lipoprotein-mediated cholesterol uptake in hepatocytes. Binds cholesterol. Binds free fatty acids and their coenzyme A derivatives, bilirubin, and some other small molecules in the cytoplasm. May be involved in intracellular lipid transport. The chain is Fatty acid-binding protein, liver (FABP1) from Sus scrofa (Pig).